Here is a 207-residue protein sequence, read N- to C-terminus: Probable RNA 2'-phosphotransferase (207 aa).

The protein belongs to the KptA/TPT1 family.

Removes the 2'-phosphate from RNA via an intermediate in which the phosphate is ADP-ribosylated by NAD followed by a presumed transesterification to release the RNA and generate ADP-ribose 1''-2''-cyclic phosphate (APPR&gt;P). May function as an ADP-ribosylase. The chain is Probable RNA 2'-phosphotransferase from Methanosarcina barkeri (strain Fusaro / DSM 804).